The following is a 146-amino-acid chain: Hemoglobin subunit beta-1 (146 aa).

The region spanning 2-146 (EWSSNERSTI…VISALSRQYF (145 aa)) is the Globin domain. The heme b site is built by His63 and His92.

Belongs to the globin family. Heterotetramer of two alpha chains and two beta chains. Red blood cells.

Functionally, involved in oxygen transport from gills to the various peripheral tissues. The polypeptide is Hemoglobin subunit beta-1 (hbb1) (Muraena helena (Mediterranean moray)).